The primary structure comprises 633 residues: Pollen receptor-like kinase 3 (633 aa).

A signal peptide spans 1–19 (MTAVLFLCFLLICFSFTPS). 2 N-linked (GlcNAc...) asparagine glycosylation sites follow: N22 and N37. C53 and C62 are joined by a disulfide. LRR repeat units lie at residues 90 to 115 (LPNL…KLPG), 117 to 137 (KSLL…FFKE), 138 to 162 (TPQL…LMQL), 163 to 186 (AGLE…TDGN), and 188 to 210 (VLKS…ISDR). N123 carries N-linked (GlcNAc...) asparagine glycosylation. C224 and C232 are disulfide-bonded. N246 carries N-linked (GlcNAc...) asparagine glycosylation. Residues 249 to 269 (AKAIFMVILFLLIFLFVVAII) traverse the membrane as a helical segment. Residues 294-314 (VEVRVPDSIKKPIDSSKKRSN) are compositionally biased toward basic and acidic residues. The tract at residues 294–339 (VEVRVPDSIKKPIDSSKKRSNAEGSSKKGSSHNGKGAGGGPGSGMG) is disordered. The segment covering 328–338 (KGAGGGPGSGM) has biased composition (gly residues). Positions 358–633 (KAAAEVLGNG…IVRRIERVTL (276 aa)) constitute a Protein kinase domain. ATP is bound by residues 364-372 (LGNGSLGSA) and K386. S438 carries the post-translational modification Phosphoserine. T458 carries the post-translational modification Phosphothreonine. The residue at position 535 (S535) is a Phosphoserine.

The protein belongs to the protein kinase superfamily. Ser/Thr protein kinase family. In terms of assembly, interacts in vitro with ROPGEF1 (via PRONE domain). Interacts with PRK6. As to expression, expressed in pollen and/or in flowers, but not in leaves.

Its subcellular location is the membrane. It carries out the reaction L-seryl-[protein] + ATP = O-phospho-L-seryl-[protein] + ADP + H(+). The catalysed reaction is L-threonyl-[protein] + ATP = O-phospho-L-threonyl-[protein] + ADP + H(+). With respect to regulation, the phosphorylation activity is calcium-independent. In terms of biological role, receptor-like kinase involved in the control of pollen germination and pollen tube polar growth. Can phosphorylate ROPGEF1 in vitro. The sequence is that of Pollen receptor-like kinase 3 from Arabidopsis thaliana (Mouse-ear cress).